A 501-amino-acid polypeptide reads, in one-letter code: uncharacterized protein (501 aa).

The Proton donor role is filled by Glu-236. Glu-333 (nucleophile) is an active-site residue.

This sequence belongs to the glycosyl hydrolase 5 (cellulase A) family.

The protein resides in the mitochondrion intermembrane space. This is an uncharacterized protein from Saccharomyces cerevisiae (strain ATCC 204508 / S288c) (Baker's yeast).